A 156-amino-acid chain; its full sequence is Ribosomal RNA large subunit methyltransferase H (156 aa).

Residues L73, G104, and I123–L128 each bind S-adenosyl-L-methionine.

Belongs to the RNA methyltransferase RlmH family. As to quaternary structure, homodimer.

Its subcellular location is the cytoplasm. It carries out the reaction pseudouridine(1915) in 23S rRNA + S-adenosyl-L-methionine = N(3)-methylpseudouridine(1915) in 23S rRNA + S-adenosyl-L-homocysteine + H(+). Specifically methylates the pseudouridine at position 1915 (m3Psi1915) in 23S rRNA. This is Ribosomal RNA large subunit methyltransferase H from Burkholderia ambifaria (strain MC40-6).